Consider the following 237-residue polypeptide: Undecaprenyl-diphosphatase (237 aa).

Helical transmembrane passes span 38-58 (QTAV…LDGI), 65-85 (WRII…GVLF), 92-112 (LFSS…ILMF), 126-146 (MSFL…FPGI), 166-186 (ALQY…ILGL), 191-211 (VTIL…YVLS), and 217-237 (GKIW…YLAG).

Belongs to the UppP family.

The protein localises to the cell inner membrane. It carries out the reaction di-trans,octa-cis-undecaprenyl diphosphate + H2O = di-trans,octa-cis-undecaprenyl phosphate + phosphate + H(+). In terms of biological role, catalyzes the dephosphorylation of undecaprenyl diphosphate (UPP). Confers resistance to bacitracin. This chain is Undecaprenyl-diphosphatase, found in Thermotoga maritima (strain ATCC 43589 / DSM 3109 / JCM 10099 / NBRC 100826 / MSB8).